A 348-amino-acid chain; its full sequence is Fasciculation and elongation protein zeta-2 (348 aa).

The tract at residues tyrosine 11 to glycine 40 is disordered. 3 positions are modified to phosphoserine: serine 130, serine 171, and serine 190. The stretch at glutamate 206–serine 280 forms a coiled coil. The interval glutamine 265–threonine 296 is disordered.

This sequence belongs to the zygin family. In terms of assembly, homodimer; disulfide-linked. May form heterodimers with FEZ1. Interacts with synaptotagmin.

Involved in axonal outgrowth and fasciculation. This is Fasciculation and elongation protein zeta-2 (Fez2) from Mus musculus (Mouse).